The primary structure comprises 178 residues: MLEGIIRESIGKKGTKALRRDGYLIANIYGKGLQNLHAAFKENEYIRTVRNKETLSFPIKVDSKEMNVVVQAYEAHPVTGKLLHVDLMVAQPNVVTHYHVPVVTEGDAIGLKNKGLIHISKPRLRVKATIENTPNSIVVDVTKMDVGDAKMVRDIAKIANVTFTDADRVSVLSVIKAK.

This sequence belongs to the bacterial ribosomal protein bL25 family. CTC subfamily. Part of the 50S ribosomal subunit; part of the 5S rRNA/L5/L18/L25 subcomplex. Contacts the 5S rRNA. Binds to the 5S rRNA independently of L5 and L18.

This is one of the proteins that binds to the 5S RNA in the ribosome where it forms part of the central protuberance. The sequence is that of Large ribosomal subunit protein bL25 from Sulfurimonas denitrificans (strain ATCC 33889 / DSM 1251) (Thiomicrospira denitrificans (strain ATCC 33889 / DSM 1251)).